The following is a 469-amino-acid chain: Glutamine synthetase (469 aa).

Residues 13–97 form the GS beta-grasp domain; the sequence is HEVKFVDLRF…IRCDILEPGT (85 aa). In terms of domain architecture, GS catalytic spans 105 to 469; it reads PRSIAKRAED…PVEFELYYSV (365 aa). Glutamate 130 and glutamate 132 together coordinate Mg(2+). Residue glutamate 208 participates in ATP binding. Residues glutamate 213 and glutamate 221 each contribute to the Mg(2+) site. L-glutamate is bound by residues 265 to 266 and glycine 266; that span reads NG. Histidine 270 is a Mg(2+) binding site. ATP is bound by residues 272 to 274 and serine 274; that span reads HMS. The L-glutamate site is built by arginine 322, glutamate 328, and arginine 340. ATP contacts are provided by arginine 340, arginine 345, and lysine 353. Glutamate 358 provides a ligand contact to Mg(2+). Arginine 360 is an L-glutamate binding site. The residue at position 398 (tyrosine 398) is an O-AMP-tyrosine.

This sequence belongs to the glutamine synthetase family. In terms of assembly, oligomer of 12 subunits arranged in the form of two hexagons. Mn(2+) is required as a cofactor.

The protein resides in the cytoplasm. The catalysed reaction is L-glutamate + NH4(+) + ATP = L-glutamine + ADP + phosphate + H(+). With respect to regulation, when cellular nitrogen levels are high, the C-terminal adenylyl transferase (AT) of GlnE inhibits GlnA by covalent transfer of an adenylyl group from ATP to Tyr-398. Conversely, when nitrogen levels are low, the N-terminal adenylyl removase (AR) of GlnE activates GlnA by removing the adenylyl group by phosphorolysis. The fully adenylated enzyme complex is inactive. Its function is as follows. Catalyzes the ATP-dependent biosynthesis of glutamine from glutamate and ammonia. In Salmonella typhi, this protein is Glutamine synthetase.